The following is a 151-amino-acid chain: Methylated-DNA--protein-cysteine methyltransferase (151 aa).

Cys119 acts as the Nucleophile; methyl group acceptor in catalysis.

This sequence belongs to the MGMT family.

Its subcellular location is the cytoplasm. It catalyses the reaction a 6-O-methyl-2'-deoxyguanosine in DNA + L-cysteinyl-[protein] = S-methyl-L-cysteinyl-[protein] + a 2'-deoxyguanosine in DNA. It carries out the reaction a 4-O-methyl-thymidine in DNA + L-cysteinyl-[protein] = a thymidine in DNA + S-methyl-L-cysteinyl-[protein]. Its function is as follows. Involved in the cellular defense against the biological effects of O6-methylguanine (O6-MeG) and O4-methylthymine (O4-MeT) in DNA. Repairs the methylated nucleobase in DNA by stoichiometrically transferring the methyl group to a cysteine residue in the enzyme. This is a suicide reaction: the enzyme is irreversibly inactivated. The protein is Methylated-DNA--protein-cysteine methyltransferase of Saccharolobus islandicus (strain M.16.27) (Sulfolobus islandicus).